Here is a 308-residue protein sequence, read N- to C-terminus: Adult enhancer factor 1 (308 aa).

Disordered stretches follow at residues 50–94 (AHMA…PLPF) and 123–143 (QAAA…THLT). The span at 56–76 (QQQQQQQQQQQQQHHQQQQQQ) shows a compositional bias: low complexity. A compositionally biased stretch (pro residues) spans 81–90 (PSVPPPPTEL). 4 consecutive C2H2-type zinc fingers follow at residues 184–206 (FHCT…VKIH), 212–234 (YKCN…LKIH), 240–262 (YNCN…VKIH), and 268–290 (FECV…IKIH).

Found in all tissues examined including the ovary and the fat body.

The protein localises to the nucleus. Transcriptional repressor that binds specifically to fat body-specific enhancers, namely the adult ADH enhancer (AAE) and the enhancer that controls yolk protein gene expression. The sequence is that of Adult enhancer factor 1 (Aef1) from Drosophila melanogaster (Fruit fly).